The following is a 421-amino-acid chain: Ankyrin repeat and SOCS box protein 6 (421 aa).

ANK repeat units follow at residues 67-97 (EGVSNALLKMAELGLTRAADVLLRHGANLNF), 102-131 (TYYTALHIAVLRNQPDMVELLVHHGADINR), 136-166 (HESSPLDLASEEPERLPCLQRLLDLGADVNA), 170-205 (HGKTALLHALASSDGVQIHNTENIRLLLEGGADVKA), 226-255 (GGDKEEAQMINRFCFQVTRLLLAHGADPSE), and 260-289 (ESLTHICLKSFKLHFPLLRFLLESGAAYNC). Positions 360-415 (ALHFSLRQLESYPPPLKHLCRVAIRLYLQPWPVDVKVKALPLPDRLKWYLLSEHSG) constitute an SOCS box domain.

The protein belongs to the ankyrin SOCS box (ASB) family. As to quaternary structure, binds APS. Identified in a complex with ELOB and ELOC. Interacts with CUL5 and RNF7. Interacts with SQSTM1.

It localises to the cytoplasm. It functions in the pathway protein modification; protein ubiquitination. Functionally, probable substrate-recognition component of a SCF-like ECS (Elongin-Cullin-SOCS-box protein) E3 ubiquitin-protein ligase complex which mediates the ubiquitination and subsequent proteasomal degradation of target proteins. May play a role in the regulation of cell proliferation and autophagy by promoting the ubiquitination and degradation of SQSTM1. In Pongo abelii (Sumatran orangutan), this protein is Ankyrin repeat and SOCS box protein 6 (ASB6).